The chain runs to 349 residues: Flavonol synthase/flavanone 3-hydroxylase (349 aa).

A Fe2OG dioxygenase domain is found at 213 to 310; that stretch reads DIVYMLKINY…RMSWPVFLEP (98 aa). Fe cation contacts are provided by His-238, Asp-240, and His-291.

The protein belongs to the iron/ascorbate-dependent oxidoreductase family. It depends on Fe cation as a cofactor. L-ascorbate serves as cofactor.

It is found in the cytoplasm. The enzyme catalyses a (2R,3R)-dihydroflavonol + 2-oxoglutarate + O2 = a flavonol + succinate + CO2 + H2O. It carries out the reaction a (2S)-flavan-4-one + 2-oxoglutarate + O2 = a (2R,3R)-dihydroflavonol + succinate + CO2. Its pathway is secondary metabolite biosynthesis; flavonoid biosynthesis. Functionally, catalyzes the formation of flavonols from dihydroflavonols. It can act on dihydrokaempferol to produce kaempferol, on dihydroquercetin to produce quercitin and on dihydromyricetin to produce myricetin. This Solanum tuberosum (Potato) protein is Flavonol synthase/flavanone 3-hydroxylase.